The sequence spans 649 residues: Protein arginine N-methyltransferase 5 (649 aa).

The tract at residues 10–300 (KSESRYCGVE…SPYLDYIAYI (291 aa)) is TIM barrel. Positions 321–627 (LQSPLQPLMD…CGATKVWYEW (307 aa)) constitute an SAM-dependent MTase PRMT-type domain. Residue tyrosine 337 participates in S-adenosyl-L-methionine binding. Phenylalanine 340 contributes to the a protein binding site. Residues 346–347 (KY), glutamate 405, and 433–434 (DM) contribute to the S-adenosyl-L-methionine site. Glutamate 449 and glutamate 458 together coordinate a protein. Active-site proton donor/acceptor residues include glutamate 449 and glutamate 458. Residues 479–649 (PSSYTSFIEP…SNGRSYWVGL (171 aa)) form a beta barrel region. The interval 491-507 (ASKLHNDIKAHKDIAHF) is dimerization.

This sequence belongs to the class I-like SAM-binding methyltransferase superfamily. Protein arginine N-methyltransferase family.

It is found in the cytoplasm. The enzyme catalyses L-arginyl-[protein] + 2 S-adenosyl-L-methionine = N(omega),N(omega)'-dimethyl-L-arginyl-[protein] + 2 S-adenosyl-L-homocysteine + 2 H(+). Its function is as follows. Methylates arginine residues in proteins such as histone H4. The sequence is that of Protein arginine N-methyltransferase 5 (PRMT5) from Oryza sativa subsp. japonica (Rice).